The chain runs to 147 residues: Putative nickel-responsive regulator (147 aa).

Positions 76, 87, 89, and 95 each coordinate Ni(2+).

This sequence belongs to the transcriptional regulatory CopG/NikR family. The cofactor is Ni(2+).

In terms of biological role, transcriptional regulator. This is Putative nickel-responsive regulator from Rhodopseudomonas palustris (strain TIE-1).